Consider the following 621-residue polypeptide: Phytoene desaturase (621 aa).

The signal sequence occupies residues 1–23; sequence MPSTSKRPTAIVIGSGVGGVSTA. The segment at 394-425 is disordered; it reads HASQAHQLSASRNGHISSASPPDQPGLTPTEK. The segment covering 397–414 has biased composition (polar residues); sequence QAHQLSASRNGHISSASP. Residues 598-618 traverse the membrane as a helical segment; sequence WEQWVSVLIYLLVGIFAWLWM.

It belongs to the carotenoid/retinoid oxidoreductase family. Requires NAD(+) as cofactor.

Its subcellular location is the membrane. It catalyses the reaction 15-cis-phytoene + 5 A = all-trans-3,4-didehydrolycopene + 5 AH2. It functions in the pathway carotenoid biosynthesis; lycopene biosynthesis. In terms of biological role, phytoene desaturase involved in the carotenoid biosynthesis pathway. Converts phytoene into 3,4-didehydrolycopene via the intermediary of phytofluene, zeta-carotene, neurosporene and lycopene, by introducing up to five double bonds into phytoene. This is Phytoene desaturase (PDH1) from Cercospora nicotianae (Barn spot disease fungus).